A 201-amino-acid polypeptide reads, in one-letter code: Small ribosomal subunit protein uS4 (201 aa).

The S4 RNA-binding domain maps to 91 to 155; it reads TRLDNVVYRA…STLPFQVARE (65 aa).

Belongs to the universal ribosomal protein uS4 family. As to quaternary structure, part of the 30S ribosomal subunit. Contacts protein S5. The interaction surface between S4 and S5 is involved in control of translational fidelity.

One of the primary rRNA binding proteins, it binds directly to 16S rRNA where it nucleates assembly of the body of the 30S subunit. Its function is as follows. With S5 and S12 plays an important role in translational accuracy. The protein is Small ribosomal subunit protein uS4 of Nocardia farcinica (strain IFM 10152).